A 1012-amino-acid polypeptide reads, in one-letter code: Tolloid-like protein 2 (1012 aa).

The N-terminal stretch at 1 to 21 (MPLATTLGTLVLLLLLPLPRG) is a signal peptide. A propeptide spanning residues 22–146 (AEVTGDHSNV…AKTFSARVRR (125 aa)) is cleaved from the precursor. Residues 83–135 (KPSIDKPGHDTGGLEETSARWPNDTASNASIQAPRKDGKDATTFLPNPGTSNT) are disordered. A compositionally biased stretch (polar residues) spans 126–135 (FLPNPGTSNT). In terms of domain architecture, Peptidase M12A spans 146–346 (RATTSRTERI…AQARKLYKCP (201 aa)). N-linked (GlcNAc...) asparagine glycosylation is present at Asn168. 4 cysteine pairs are disulfide-bonded: Cys189-Cys345, Cys209-Cys231, Cys211-Cys212, and Cys348-Cys374. A Zn(2+)-binding site is contributed by His239. Glu240 is an active-site residue. Zn(2+) contacts are provided by His243 and His249. CUB domains follow at residues 348-460 (CGET…YEAM) and 461-573 (CGGD…FFKE). N-linked (GlcNAc...) asparagine glycans are attached at residues Asn358 and Asn389. Intrachain disulfides connect Cys401–Cys423, Cys461–Cys487, Cys514–Cys536, Cys577–Cys589, Cys585–Cys598, Cys600–Cys613, Cys617–Cys643, Cys670–Cys692, Cys733–Cys744, Cys740–Cys753, Cys755–Cys768, and Cys773–Cys799. Residues 573–614 (EVDECSWPDHGGCEQRCVNTLGSYTCACDPGYELAADKKTCE) enclose the EGF-like 1; calcium-binding domain. Positions 617–729 (CGGFITKLNG…RGFRAHFFSD (113 aa)) constitute a CUB 3 domain. N-linked (GlcNAc...) asparagine glycosylation is present at Asn625. An EGF-like 2; calcium-binding domain is found at 729–769 (DKDECAKDNGGCQQECVNTFGSYLCRCRNGYRLHENGHDCK). CUB domains lie at 773–885 (CAYK…HSTE) and 886–1002 (CGGR…YTST). Residue Asn802 is glycosylated (N-linked (GlcNAc...) asparagine). Cystine bridges form between Cys826/Cys848, Cys886/Cys916, and Cys943/Cys965. 2 positions are modified to omega-N-methylarginine: Arg960 and Arg963.

Zn(2+) serves as cofactor.

The protein localises to the secreted. In terms of biological role, protease which specifically processes pro-lysyl oxidase. Required for the embryonic development. Predominant protease, which in the development, influences dorsal-ventral patterning and skeletogenesis. The protein is Tolloid-like protein 2 (Tll2) of Mus musculus (Mouse).